The chain runs to 190 residues: Adenine phosphoribosyltransferase (190 aa).

It belongs to the purine/pyrimidine phosphoribosyltransferase family. Homodimer.

It localises to the cytoplasm. The catalysed reaction is AMP + diphosphate = 5-phospho-alpha-D-ribose 1-diphosphate + adenine. The protein operates within purine metabolism; AMP biosynthesis via salvage pathway; AMP from adenine: step 1/1. Its function is as follows. Catalyzes a salvage reaction resulting in the formation of AMP, that is energically less costly than de novo synthesis. The chain is Adenine phosphoribosyltransferase from Cupriavidus necator (strain ATCC 17699 / DSM 428 / KCTC 22496 / NCIMB 10442 / H16 / Stanier 337) (Ralstonia eutropha).